The primary structure comprises 281 residues: Transcription factor lfc1 (281 aa).

Residues 60-87 (CLTCRMKKIKCDETKPTCARCTHGQREC) constitute a DNA-binding region (zn(2)-C6 fungal-type).

The protein resides in the nucleus. Transcription factor that acts as a negative regulator of basidioma development via repressing the expression of genes involved in basidioma development, including hydrophobins such as Hyd-1 and Hyd-8, lectins such as JRL1, as well as the fruiting body differentiation gene FVFD16. In Flammulina velutipes (Agaricus velutipes), this protein is Transcription factor lfc1.